A 338-amino-acid chain; its full sequence is CRISPR system Cmr subunit Cmr1-1 (338 aa).

Belongs to the CRISPR system Cmr1 family. Part of the type III-B Cmr ribonucleoprotein (RNP) complex, an elongated RNP with Cmr2 and Cmr3 as the base, with Cmr4 and Cmr5 forming a helical core along the mature crRNA (39 or 45 nt in length), while the complex is capped by Cmr6 and Cmr1. The 5' end of the crRNA is bound to Cmr2 and Cmr3, while Cmr6 and a Cmr1 subunit (Cmr1-1 or Cmr1-2) cap the 3' end of the crRNA. The target RNA lies antiparallel to the crRNA, with its 5' end near Cmr1 and Cmr6 and its 3' end near Cmr2 and Cmr3; major target cleavage occurs nears the junction of Cmr1/Cmr6 and Cmr4/Cmr, with minor cleavage occurring at 6 nt intervals which coincide with the proposed spacing of Cmr4 subunits.

It is found in the cytoplasm. CRISPR (clustered regularly interspaced short palindromic repeat), is an adaptive immune system that provides protection against mobile genetic elements (viruses, transposable elements and conjugative plasmids). CRISPR clusters contain sequences complementary to antecedent mobile elements and target invading nucleic acids. CRISPR clusters are transcribed and processed into CRISPR RNA (crRNA), formerly called psiRNA (prokaryotic silencing) in this organism. Part of the Cmr ribonucleoprotein complex which has divalent cation-dependent endoribonuclease activity specific for ssRNA complementary to the crRNA (target RNA), generating 5' hydroxy- and 3' phosphate or 2'-3' cyclic phosphate termini. Cmr4 is probably the subunit that cleaves target RNA. Cmr complex does not cleave ssDNA complementary to the crRNA. Cleavage of invading RNA is guided by the crRNA; substrate cleavage occurs a fixed distance (14 nt) from the 3' end of the crRNA. In vitro reconstitution shows Cmr1-2 and Cmr5 are not absolutely necessary for target cleavage. This chain is CRISPR system Cmr subunit Cmr1-1, found in Pyrococcus furiosus (strain ATCC 43587 / DSM 3638 / JCM 8422 / Vc1).